A 317-amino-acid polypeptide reads, in one-letter code: Annexin D2 (317 aa).

Ala2 bears the N-acetylalanine mark. Annexin repeat units follow at residues 11–82 (PLPE…LWTL), 83–154 (DPPE…PLVS), 166–238 (MLAR…AVIT), and 242–313 (YPEK…ALLG). Phe24, Gly26, Gly28, and Glu68 together coordinate Ca(2+). Ser95 carries the phosphoserine modification. Thr100 and Thr112 each carry phosphothreonine. At Tyr129 the chain carries Phosphotyrosine. Residues Ile255 and Gly259 each coordinate Ca(2+). Tyr284 carries the phosphotyrosine modification. Ser289 is modified (phosphoserine). Ca(2+) contacts are provided by Asp299, Thr300, and Glu305.

It belongs to the annexin (TC 1.A.31.1) family. Expressed mainly in roots and flowers. Low in stems and bearly detectable in leaves.

It is found in the cytoplasm. The protein resides in the cytosol. It localises to the membrane. Its function is as follows. May mediate regulated, targeted secretion of Golgi-derived vesicles during seedling development. In Arabidopsis thaliana (Mouse-ear cress), this protein is Annexin D2 (ANN2).